The sequence spans 143 residues: NADH-quinone oxidoreductase subunit A (143 aa).

3 consecutive transmembrane segments (helical) span residues 8–28 (FGNVFVFLLLGVVFVAGGYLT), 63–83 (FYVVALIFIIFDVEVVFLFPW), and 93–113 (FALIEALVFAGILILGLVYAW).

Belongs to the complex I subunit 3 family. NDH-1 is composed of 14 different subunits. Subunits NuoA, H, J, K, L, M, N constitute the membrane sector of the complex.

It is found in the cell inner membrane. It catalyses the reaction a quinone + NADH + 5 H(+)(in) = a quinol + NAD(+) + 4 H(+)(out). In terms of biological role, NDH-1 shuttles electrons from NADH, via FMN and iron-sulfur (Fe-S) centers, to quinones in the respiratory chain. The immediate electron acceptor for the enzyme in this species is believed to be a menaquinone. Couples the redox reaction to proton translocation (for every two electrons transferred, four hydrogen ions are translocated across the cytoplasmic membrane), and thus conserves the redox energy in a proton gradient. The polypeptide is NADH-quinone oxidoreductase subunit A (Chlorobium luteolum (strain DSM 273 / BCRC 81028 / 2530) (Pelodictyon luteolum)).